The chain runs to 321 residues: Ribosomal RNA small subunit methyltransferase H (321 aa).

Residues 40–42 (GGH), D60, F84, D106, and Q113 contribute to the S-adenosyl-L-methionine site.

This sequence belongs to the methyltransferase superfamily. RsmH family.

It is found in the cytoplasm. The enzyme catalyses cytidine(1402) in 16S rRNA + S-adenosyl-L-methionine = N(4)-methylcytidine(1402) in 16S rRNA + S-adenosyl-L-homocysteine + H(+). Its function is as follows. Specifically methylates the N4 position of cytidine in position 1402 (C1402) of 16S rRNA. The polypeptide is Ribosomal RNA small subunit methyltransferase H (Haemophilus influenzae (strain ATCC 51907 / DSM 11121 / KW20 / Rd)).